The primary structure comprises 115 residues: Holo-[acyl-carrier-protein] synthase (115 aa).

Mg(2+)-binding residues include Asp8 and Glu50.

It belongs to the P-Pant transferase superfamily. AcpS family. The cofactor is Mg(2+).

The protein resides in the cytoplasm. The enzyme catalyses apo-[ACP] + CoA = holo-[ACP] + adenosine 3',5'-bisphosphate + H(+). Transfers the 4'-phosphopantetheine moiety from coenzyme A to a Ser of acyl-carrier-protein. The sequence is that of Holo-[acyl-carrier-protein] synthase from Arthrobacter sp. (strain FB24).